The following is a 521-amino-acid chain: AAA ATPase forming ring-shaped complexes (521 aa).

Residues Thr4 to Gln44 are a coiled coil. Gly235–Met240 contributes to the ATP binding site.

The protein belongs to the AAA ATPase family. As to quaternary structure, homohexamer. Assembles into a hexameric ring structure.

The chain is AAA ATPase forming ring-shaped complexes from Bifidobacterium longum subsp. infantis (strain ATCC 15697 / DSM 20088 / JCM 1222 / NCTC 11817 / S12).